Here is a 300-residue protein sequence, read N- to C-terminus: 33 kDa chaperonin (300 aa).

Disulfide bonds link C235/C237 and C269/C272.

Belongs to the HSP33 family. Under oxidizing conditions two disulfide bonds are formed involving the reactive cysteines. Under reducing conditions zinc is bound to the reactive cysteines and the protein is inactive.

Its subcellular location is the cytoplasm. Its function is as follows. Redox regulated molecular chaperone. Protects both thermally unfolding and oxidatively damaged proteins from irreversible aggregation. Plays an important role in the bacterial defense system toward oxidative stress. This Pseudomonas fluorescens (strain SBW25) protein is 33 kDa chaperonin.